The chain runs to 117 residues: Fluoride-specific ion channel FluC 1 (117 aa).

Helical transmembrane passes span 1–21 (MIHI…RAWL), 35–55 (IATL…YGIA), 60–80 (LFSL…STLS), and 97–117 (FSYS…GYSI). Gly71 and Thr74 together coordinate Na(+).

It belongs to the fluoride channel Fluc/FEX (TC 1.A.43) family.

Its subcellular location is the cell membrane. The catalysed reaction is fluoride(in) = fluoride(out). Its activity is regulated as follows. Na(+) is not transported, but it plays an essential structural role and its presence is essential for fluoride channel function. In terms of biological role, fluoride-specific ion channel. Important for reducing fluoride concentration in the cell, thus reducing its toxicity. This chain is Fluoride-specific ion channel FluC 1, found in Staphylococcus haemolyticus (strain JCSC1435).